The chain runs to 126 residues: MILGIGIDTVEISRFQRFLDEDNQALLNRLFAPAEQEYCRPRKQAASCLAARFAAKEAFVKALGTGLRDGICWTEIAVGNDQLGKPFLKLSGRALQLFSEQGAASAHLSLSHDGGHAVAQVILEAP.

The Mg(2+) site is built by Asp8 and Glu57.

It belongs to the P-Pant transferase superfamily. AcpS family. Mg(2+) serves as cofactor.

It is found in the cytoplasm. It catalyses the reaction apo-[ACP] + CoA = holo-[ACP] + adenosine 3',5'-bisphosphate + H(+). Functionally, transfers the 4'-phosphopantetheine moiety from coenzyme A to a Ser of acyl-carrier-protein. This Trichlorobacter lovleyi (strain ATCC BAA-1151 / DSM 17278 / SZ) (Geobacter lovleyi) protein is Holo-[acyl-carrier-protein] synthase.